The chain runs to 272 residues: Dermonecrotic toxin SpeSicTox-betaIB2a (272 aa).

His5 is a catalytic residue. Positions 25 and 27 each coordinate Mg(2+). His41 functions as the Nucleophile in the catalytic mechanism. Disulfide bonds link Cys45/Cys51 and Cys47/Cys191. Residue Asp85 participates in Mg(2+) binding.

Belongs to the arthropod phospholipase D family. Class II subfamily. Requires Mg(2+) as cofactor. Expressed by the venom gland.

It is found in the secreted. It catalyses the reaction an N-(acyl)-sphingosylphosphocholine = an N-(acyl)-sphingosyl-1,3-cyclic phosphate + choline. The enzyme catalyses an N-(acyl)-sphingosylphosphoethanolamine = an N-(acyl)-sphingosyl-1,3-cyclic phosphate + ethanolamine. The catalysed reaction is a 1-acyl-sn-glycero-3-phosphocholine = a 1-acyl-sn-glycero-2,3-cyclic phosphate + choline. It carries out the reaction a 1-acyl-sn-glycero-3-phosphoethanolamine = a 1-acyl-sn-glycero-2,3-cyclic phosphate + ethanolamine. In terms of biological role, dermonecrotic toxins cleave the phosphodiester linkage between the phosphate and headgroup of certain phospholipids (sphingolipid and lysolipid substrates), forming an alcohol (often choline) and a cyclic phosphate. This toxin acts on sphingomyelin (SM). It may also act on ceramide phosphoethanolamine (CPE), lysophosphatidylcholine (LPC) and lysophosphatidylethanolamine (LPE), but not on lysophosphatidylserine (LPS), and lysophosphatidylglycerol (LPG). It acts by transphosphatidylation, releasing exclusively cyclic phosphate products as second products. Induces dermonecrosis, hemolysis, increased vascular permeability, edema, inflammatory response, and platelet aggregation. This Sicarius peruensis (Six-eyed sand spider) protein is Dermonecrotic toxin SpeSicTox-betaIB2a.